Reading from the N-terminus, the 520-residue chain is Amine oxidase [flavin-containing] B (520 aa).

Ser2 is subject to N-acetylserine. At 2–489 the chain is on the cytoplasmic side; sequence SNKSDVIVVG…TFLERHLPSV (488 aa). N6-acetyllysine is present on residues Lys52 and Lys248. Residue Cys397 is modified to S-8alpha-FAD cysteine. A helical; Anchor for type IV membrane protein membrane pass occupies residues 490 to 516; that stretch reads PGLLKLFGLTTILSATALGFLAHKRGL. Residues 517-520 lie on the Mitochondrial intermembrane side of the membrane; it reads FVHF.

The protein belongs to the flavin monoamine oxidase family. As to quaternary structure, monomer, homo- or heterodimer (containing two subunits of similar size). Each subunit contains a covalently bound flavin. Enzymatically active as monomer. It depends on FAD as a cofactor.

The protein localises to the mitochondrion outer membrane. It catalyses the reaction a secondary aliphatic amine + O2 + H2O = a primary amine + an aldehyde + H2O2. It carries out the reaction (R)-adrenaline + O2 + H2O = (R)-3,4-dihydroxymandelaldehyde + methylamine + H2O2. The catalysed reaction is a primary methyl amine + O2 + H2O = an aldehyde + H2O2 + NH4(+). The enzyme catalyses benzylamine + O2 + H2O = benzaldehyde + H2O2 + NH4(+). It catalyses the reaction dopamine + O2 + H2O = 3,4-dihydroxyphenylacetaldehyde + H2O2 + NH4(+). It carries out the reaction tyramine + O2 + H2O = (4-hydroxyphenyl)acetaldehyde + H2O2 + NH4(+). The catalysed reaction is (R)-noradrenaline + O2 + H2O = (R)-3,4-dihydroxymandelaldehyde + H2O2 + NH4(+). The enzyme catalyses 2-phenylethylamine + O2 + H2O = 2-phenylacetaldehyde + H2O2 + NH4(+). It catalyses the reaction N-acetylputrescine + O2 + H2O = 4-acetamidobutanal + H2O2 + NH4(+). Functionally, catalyzes the oxidative deamination of primary and some secondary amines such as neurotransmitters, and exogenous amines including the tertiary amine, neurotoxin 1-methyl-4-phenyl-1,2,3,6-tetrahydropyridine (MPTP), with concomitant reduction of oxygen to hydrogen peroxide and participates in the metabolism of neuroactive and vasoactive amines in the central nervous system and peripheral tissues. Preferentially degrades benzylamine and phenylethylamine. This Mus musculus (Mouse) protein is Amine oxidase [flavin-containing] B.